A 1072-amino-acid chain; its full sequence is Zn(2)-C6 fungal-type transcription factor FTF2 (1072 aa).

Positions 179–206 (CIACRRKKIRCSGEKPACKHCLRSRIPC) form a DNA-binding region, zn(2)-C6 fungal-type.

It localises to the nucleus. Zn(2)-C6 fungal-type transcription factor that has a role in conidia production and also in plant colonization. Acts as a negative regulator of the production of macroconidia and is required for full virulence and the positive regulation of SIX effectors. In addition, FTF2 is also involved in the regulation of class II hydrophobins FOXG_02746 and FOXG_02748 likely required for plant colonization. The protein is Zn(2)-C6 fungal-type transcription factor FTF2 of Fusarium oxysporum f. sp. lycopersici (strain 4287 / CBS 123668 / FGSC 9935 / NRRL 34936) (Fusarium vascular wilt of tomato).